Here is a 579-residue protein sequence, read N- to C-terminus: Glutamate--tRNA ligase (579 aa).

The short motif at 114–124 (PNPNGPWHIGH) is the 'HIGH' region element.

This sequence belongs to the class-I aminoacyl-tRNA synthetase family. Glutamate--tRNA ligase type 2 subfamily.

Its subcellular location is the cytoplasm. It carries out the reaction tRNA(Glu) + L-glutamate + ATP = L-glutamyl-tRNA(Glu) + AMP + diphosphate. Its function is as follows. Catalyzes the attachment of glutamate to tRNA(Glu) in a two-step reaction: glutamate is first activated by ATP to form Glu-AMP and then transferred to the acceptor end of tRNA(Glu). The protein is Glutamate--tRNA ligase of Haloarcula marismortui (strain ATCC 43049 / DSM 3752 / JCM 8966 / VKM B-1809) (Halobacterium marismortui).